Reading from the N-terminus, the 245-residue chain is UPF0246 protein cgR_1824 (245 aa).

It belongs to the UPF0246 family.

The protein is UPF0246 protein cgR_1824 of Corynebacterium glutamicum (strain R).